The primary structure comprises 265 residues: Neutrophil elastase (265 aa).

Positions 1–26 (MALGRLSSRTLAAMLLALFLGGPALA) are cleaved as a signal peptide. The 219-residue stretch at 29 to 247 (IVGGRPARPH…FADWINSIIR (219 aa)) folds into the Peptidase S1 domain. The cysteines at positions 54 and 70 are disulfide-linked. Residues histidine 69 and aspartate 116 each act as charge relay system in the active site. 2 N-linked (GlcNAc...) asparagine glycosylation sites follow: asparagine 123 and asparagine 172. 3 disulfide bridges follow: cysteine 150-cysteine 208, cysteine 180-cysteine 187, and cysteine 198-cysteine 223. Residue serine 202 is the Charge relay system of the active site.

Belongs to the peptidase S1 family. Elastase subfamily. In terms of assembly, interacts with NOTCH2NL.

It catalyses the reaction Hydrolysis of proteins, including elastin. Preferential cleavage: Val-|-Xaa &gt; Ala-|-Xaa.. In terms of biological role, serine protease that modifies the functions of natural killer cells, monocytes and granulocytes. Inhibits C5a-dependent neutrophil enzyme release and chemotaxis. Promotes blood coagulation. Through the activation of the platelet fibrinogen receptor integrin alpha-IIb/beta-3, potentiates platelet aggregation induced by a threshold concentration of cathepsin G (CTSG). Cleaves and thus inactivates tissue factor pathway inhibitor (TFPI). Capable of killing E.coli; probably digests outer membrane protein A (ompA) in E.coli. This is Neutrophil elastase (Elane) from Mus musculus (Mouse).